The chain runs to 173 residues: MEQGKHLAGLILAVFLLQGTMAHVKEVKVDDNREDGSVILICVTNDTTITWLKDVEQIGSGDTKKNTWNLGSSTKDPRGIYKCEGSNNQSKSLQIYYRMCQNCIELNPSTVAGFIFTEIVSIFLLAVGVYFIAGQEGVRQSRASDKQTLLNNDQLYQPLKEREDDQYSHLRKN.

A signal peptide spans 1–22 (MEQGKHLAGLILAVFLLQGTMA). At 23–111 (HVKEVKVDDN…NCIELNPSTV (89 aa)) the chain is on the extracellular side. The region spanning 24 to 94 (VKEVKVDDNR…GSNNQSKSLQ (71 aa)) is the Ig-like domain. A disulfide bridge connects residues Cys-42 and Cys-83. N-linked (GlcNAc...) asparagine glycosylation is found at Asn-45 and Asn-88. A helical membrane pass occupies residues 112-132 (AGFIFTEIVSIFLLAVGVYFI). At 133 to 173 (AGQEGVRQSRASDKQTLLNNDQLYQPLKEREDDQYSHLRKN) the chain is on the cytoplasmic side. At Ser-141 the chain carries Phosphoserine. Ser-144 is subject to Phosphoserine; by PKC. The 29-residue stretch at 145-173 (DKQTLLNNDQLYQPLKEREDDQYSHLRKN) folds into the ITAM domain. Residues 149-150 (LL) carry the Di-leucine motif motif.

In terms of assembly, the TCR-CD3 complex is composed of a CD3D/CD3E and a CD3G/CD3E heterodimers that preferentially associate with TCRalpha and TCRbeta, respectively, to form TCRalpha/CD3E/CD3G and TCRbeta/CD3G/CD3E trimers. In turn, the hexamer interacts with CD3Z homodimer to form the TCR-CD3 complex. Alternatively, TCRalpha and TCRbeta can be replaced by TCRgamma and TCRdelta. Phosphorylated on Tyr residues after T-cell receptor triggering by LCK in association with CD4/CD8. Phosphorylated also by PKC; leading to the TCR complex down-regulation. Post-translationally, phosphorylated on Tyr residues after T-cell receptor triggering by LCK in association with CD4/CD8.

Its subcellular location is the cell membrane. Functionally, part of the TCR-CD3 complex present on T-lymphocyte cell surface that plays an essential role in adaptive immune response. When antigen presenting cells (APCs) activate T-cell receptor (TCR), TCR-mediated signals are transmitted across the cell membrane by the CD3 chains CD3D, CD3E, CD3G and CD3Z. All CD3 chains contain immunoreceptor tyrosine-based activation motifs (ITAMs) in their cytoplasmic domain. Upon TCR engagement, these motifs become phosphorylated by Src family protein tyrosine kinases LCK and FYN, resulting in the activation of downstream signaling pathways. In addition to this role of signal transduction in T-cell activation, CD3G plays an essential role in the dynamic regulation of TCR expression at the cell surface. Indeed, constitutive TCR cycling is dependent on the di-leucine-based (diL) receptor-sorting motif present in CD3G. This Bos taurus (Bovine) protein is T-cell surface glycoprotein CD3 gamma chain (CD3G).